Reading from the N-terminus, the 582-residue chain is V-type ATP synthase alpha chain (582 aa).

231–238 (GPFGSGKT) contributes to the ATP binding site.

It belongs to the ATPase alpha/beta chains family.

The enzyme catalyses ATP + H2O + 4 H(+)(in) = ADP + phosphate + 5 H(+)(out). In terms of biological role, produces ATP from ADP in the presence of a proton gradient across the membrane. The V-type alpha chain is a catalytic subunit. The polypeptide is V-type ATP synthase alpha chain (Deinococcus deserti (strain DSM 17065 / CIP 109153 / LMG 22923 / VCD115)).